A 416-amino-acid polypeptide reads, in one-letter code: Vacuole membrane protein KMS2 (416 aa).

The residue at position 2 (glycine 2) is an N-acetylglycine. Topologically, residues glycine 2–asparagine 59 are cytoplasmic. Residues valine 60 to leucine 80 form a helical membrane-spanning segment. The Lumenal portion of the chain corresponds to aspartate 81 to tryptophan 100. A helical transmembrane segment spans residues tryptophan 101–leucine 123. Residues glycine 124 to asparagine 249 lie on the Cytoplasmic side of the membrane. Residues phenylalanine 250–methionine 270 form a helical membrane-spanning segment. Topologically, residues cysteine 271–phenylalanine 281 are lumenal. Residues phenylalanine 282–valine 304 form a helical membrane-spanning segment. Residues cysteine 305–asparagine 315 are Cytoplasmic-facing. A helical membrane pass occupies residues glutamate 316 to alanine 336. Residues lysine 337–serine 364 are Lumenal-facing. Residues phenylalanine 365–valine 385 traverse the membrane as a helical segment. Topologically, residues threonine 386–lysine 416 are cytoplasmic.

Belongs to the VMP1 family.

Its subcellular location is the endoplasmic reticulum membrane. Its function is as follows. Involved in the early secretory pathway. Required for the correct export of secretory products from the endoplasmic reticulum (ER) and involved in the maintenance of ER integrity. This is Vacuole membrane protein KMS2 from Arabidopsis thaliana (Mouse-ear cress).